Reading from the N-terminus, the 879-residue chain is MPTEANTYDPQRIESTAQHYWDSTHAFEVNEHSNKPKYYCLSMLPYPSGALHMGHVRNYTIGDVISRYKRMTGHNVLQPMGWDAFGLPAENAAIKNKVAPAQWTYKNIERMRTQLKSLGYAIDWSREFATCQPDYYVHEQHMFTRLMRKGLAYRRNALVNWDPVDQTVLANEQVIDGRGWRSGAPVEKREIPQWFLRITDYAQELLDGLNTLDDWPEPVKTMQRNWIGRSEGLEIQFEVRDADNNALEALRVFTTRPDTLLGVTFVSIAAEHPLALHAAKSNPALAGLLTEMKQGGLSEAELKTQEKRGMDTGLKAIHPITNEQLPVWVANFVLMAYGTGAVMAVPGHDQRDQEFANKYGLPIRQVIALKEPKNQDESTWEPDVWRDWYADKTREFELINSAEFDGLDYQDAFEVLAERFERQGRGQRRVNYRLRDWGVSRQRYWGCPIPVIYCPTCGAVPVPEDQLPVILPENVAFSGTGSPIKTDPEWRKTTCPECGGPAERETDTFDTFMESSWYYARYTSPNAHEMLDKRANYWLPVDQYIGGIEHAILHLMYFRFYHKLMRDARLVDSDEPAINLLTQGMVIAETFYRKNPDGSKDWINPADVNVECDERGRITGATLISDGQPVLIGATEKMSKSKNNGVDPQIMVTKYGADTVRLFSMFAAPPEQSLEWNEAGVEGMARFLRRLWTQVHHHAAHGPATALDITALDTAQKAMRCKTHNTIARVEDDYGRRRSFNTAIAAVMELSNTLARFDDTTTQSHAVRQEALETMVLLLNPITPHTSHALWQTLGHPETLLEDLPFPKIDTTALVRETTTLAVQVNGKLRGTIEVATDAPREHIENNARTEPNTARFLEGLTVLKIIIVPGKIVNIVAR.

Residues 45–55 (PYPSGALHMGH) carry the 'HIGH' region motif. The 'KMSKS' region motif lies at 637–641 (KMSKS). Lys640 lines the ATP pocket.

It belongs to the class-I aminoacyl-tRNA synthetase family.

The protein localises to the cytoplasm. It carries out the reaction tRNA(Leu) + L-leucine + ATP = L-leucyl-tRNA(Leu) + AMP + diphosphate. The chain is Leucine--tRNA ligase from Xylella fastidiosa (strain 9a5c).